A 372-amino-acid polypeptide reads, in one-letter code: Queuine tRNA-ribosyltransferase (372 aa).

The active-site Proton acceptor is Asp-89. Substrate is bound by residues 89 to 93, Asp-161, and Gly-232; that span reads DSGGF. The segment at 262 to 268 is RNA binding; the sequence is GIGDLPS. Catalysis depends on Asp-281, which acts as the Nucleophile. An RNA binding; important for wobble base 34 recognition region spans residues 286–290; sequence TKAAR. Zn(2+) is bound by residues Cys-319, Cys-321, Cys-324, and His-351.

This sequence belongs to the queuine tRNA-ribosyltransferase family. As to quaternary structure, homodimer. Within each dimer, one monomer is responsible for RNA recognition and catalysis, while the other monomer binds to the replacement base PreQ1. Zn(2+) is required as a cofactor.

The catalysed reaction is 7-aminomethyl-7-carbaguanine + guanosine(34) in tRNA = 7-aminomethyl-7-carbaguanosine(34) in tRNA + guanine. The protein operates within tRNA modification; tRNA-queuosine biosynthesis. Catalyzes the base-exchange of a guanine (G) residue with the queuine precursor 7-aminomethyl-7-deazaguanine (PreQ1) at position 34 (anticodon wobble position) in tRNAs with GU(N) anticodons (tRNA-Asp, -Asn, -His and -Tyr). Catalysis occurs through a double-displacement mechanism. The nucleophile active site attacks the C1' of nucleotide 34 to detach the guanine base from the RNA, forming a covalent enzyme-RNA intermediate. The proton acceptor active site deprotonates the incoming PreQ1, allowing a nucleophilic attack on the C1' of the ribose to form the product. After dissociation, two additional enzymatic reactions on the tRNA convert PreQ1 to queuine (Q), resulting in the hypermodified nucleoside queuosine (7-(((4,5-cis-dihydroxy-2-cyclopenten-1-yl)amino)methyl)-7-deazaguanosine). In Chlamydia abortus (strain DSM 27085 / S26/3) (Chlamydophila abortus), this protein is Queuine tRNA-ribosyltransferase.